The following is a 907-amino-acid chain: Dual serine/threonine and tyrosine protein kinase (907 aa).

Residues 373–409 (RKKENELYESLMNIANRKQEEMKDMIVETLNTMKEEL) are a coiled coil. In terms of domain architecture, Protein kinase spans 630-884 (PKLGQELGRG…PLLGIVQPML (255 aa)). ATP is bound by residues 636 to 644 (LGRGQYGVV) and Lys-659. Asp-755 (proton acceptor) is an active-site residue.

The protein belongs to the protein kinase superfamily. Ser/Thr protein kinase family.

The protein resides in the cytoplasm. The protein localises to the cell membrane. It localises to the apical cell membrane. Its subcellular location is the basolateral cell membrane. It is found in the cell junction. It carries out the reaction L-seryl-[protein] + ATP = O-phospho-L-seryl-[protein] + ADP + H(+). It catalyses the reaction L-threonyl-[protein] + ATP = O-phospho-L-threonyl-[protein] + ADP + H(+). The catalysed reaction is L-tyrosyl-[protein] + ATP = O-phospho-L-tyrosyl-[protein] + ADP + H(+). Its function is as follows. Acts as a positive regulator of ERK phosphorylation downstream of fibroblast growth factor-receptor activation. Involved in the regulation of both caspase-dependent apoptosis and caspase-independent cell death. In the skin, it plays a predominant role in suppressing caspase-dependent apoptosis in response to UV stress in a range of dermal cell types. This is Dual serine/threonine and tyrosine protein kinase from Macaca mulatta (Rhesus macaque).